A 151-amino-acid polypeptide reads, in one-letter code: MLRVSVRSLVRKASSKAGSKAAVPAAAAAASAPLSPATSAASARAVPPVGESRVSIPPIPGVAAPRSHRAAAAPAKKAAAPKAAKAKTPAKASRKIKKAASKPSAPKQAAGKMRKAAGKAQRKIKAAARKAAPKKMAKSFGKKGAAKKAHK.

A propeptide spanning residues Met-1 to Leu-9 is cleaved from the precursor. A disordered region spans residues Ala-13–Lys-151. Composition is skewed to low complexity over residues Ser-15–Val-49, Ala-70–Lys-91, and Ser-101–Gly-111. Residues Lys-112–Lys-151 are compositionally biased toward basic residues.

It belongs to the KAP family. In terms of assembly, associates with the kinetoplast DNA network.

It is found in the mitochondrion matrix. The protein localises to the kinetoplast. Functionally, histone H1-like DNA-binding protein involved in the organization and segregation of kinetoplast DNA (kDNA). The mitochondrial DNA of kinetoplastid protozoa consists of about 5,000 minicircles and 20 to 30 maxicircles. These circular DNAs are held together by catenation into a highly organized compact disk structure referred to as a kinetoplast DNA (kDNA) network. Binds preferentially to a specific fragment of minicircle DNA and is able to compact kDNA networks through DNA charge neutralization and condensation. This Crithidia fasciculata protein is Kinetoplast-associated protein 1 (KAP4).